Consider the following 282-residue polypeptide: Phosphate import ATP-binding protein PstB (282 aa).

The span at 1–10 shows a compositional bias: basic and acidic residues; it reads MNMAESHLDP. A disordered region spans residues 1-24; it reads MNMAESHLDPSKLATGPAGAGAAT. A compositionally biased stretch (low complexity) spans 14 to 24; that stretch reads ATGPAGAGAAT. Residues 36 to 277 enclose the ABC transporter domain; sequence IEVKNLNFFY…PARKETEDYI (242 aa). Position 68–75 (68–75) interacts with ATP; it reads GPSGCGKS.

The protein belongs to the ABC transporter superfamily. Phosphate importer (TC 3.A.1.7) family. In terms of assembly, the complex is composed of two ATP-binding proteins (PstB), two transmembrane proteins (PstC and PstA) and a solute-binding protein (PstS).

It is found in the cell inner membrane. It carries out the reaction phosphate(out) + ATP + H2O = ADP + 2 phosphate(in) + H(+). Its function is as follows. Part of the ABC transporter complex PstSACB involved in phosphate import. Responsible for energy coupling to the transport system. This chain is Phosphate import ATP-binding protein PstB, found in Burkholderia thailandensis (strain ATCC 700388 / DSM 13276 / CCUG 48851 / CIP 106301 / E264).